We begin with the raw amino-acid sequence, 186 residues long: CRS2-like protein, chloroplastic (186 aa).

A chloroplast-targeting transit peptide spans methionine 1–serine 49. Tyrosine 73 serves as a coordination point for tRNA. Histidine 78 (proton acceptor) is an active-site residue. Residues tyrosine 123, asparagine 125, and asparagine 171 each contribute to the tRNA site.

This sequence belongs to the PTH family.

It localises to the plastid. Its subcellular location is the chloroplast. This Oryza sativa subsp. japonica (Rice) protein is CRS2-like protein, chloroplastic.